The chain runs to 119 residues: Protein sigma-1-small (119 aa).

Belongs to the orthoreovirus sigma-1s protein family.

This Mammalia (T1L) protein is Protein sigma-1-small (S1).